The following is a 294-amino-acid chain: uncharacterized protein (294 aa).

It belongs to the glycosyltransferase 2 family. WaaE/KdtX subfamily.

This is an uncharacterized protein from Rickettsia bellii (strain RML369-C).